The sequence spans 405 residues: Diaminohydroxyphosphoribosylamino-pyrimidine deaminase (405 aa).

Residues 256 to 383 (YNHEEYMLKA…DLLKKAGIVV (128 aa)) enclose the CMP/dCMP-type deaminase domain. Histidine 305 provides a ligand contact to Zn(2+). Glutamate 307 functions as the Proton donor in the catalytic mechanism. Zn(2+)-binding residues include cysteine 335 and cysteine 345.

The protein belongs to the cytidine and deoxycytidylate deaminase family. Zn(2+) serves as cofactor.

Its subcellular location is the cytoplasm. The protein localises to the nucleus. The enzyme catalyses 2,5-diamino-6-hydroxy-4-(5-phosphoribosylamino)-pyrimidine + H2O + H(+) = 5-amino-6-(5-phospho-D-ribosylamino)uracil + NH4(+). The protein operates within cofactor biosynthesis; riboflavin biosynthesis; 5-amino-6-(D-ribitylamino)uracil from GTP: step 2/4. Functionally, involved in riboflavin biosynthesis. Converts 2,5-diamino-6-(ribosylamino)-4(3H)-pyrimidinone 5'-phosphate into 5-amino-6-(ribosylamino)-2,4(1H,3H)-pyrimidinedione 5'-phosphate. In Schizosaccharomyces pombe (strain 972 / ATCC 24843) (Fission yeast), this protein is Diaminohydroxyphosphoribosylamino-pyrimidine deaminase.